A 263-amino-acid chain; its full sequence is 3'-5' ssDNA/RNA exonuclease TatD (263 aa).

A divalent metal cation-binding residues include glutamate 91, histidine 127, and histidine 152.

Belongs to the metallo-dependent hydrolases superfamily. TatD-type hydrolase family. TatD subfamily. In terms of assembly, monomer. Mg(2+) serves as cofactor.

It localises to the cytoplasm. 3'-5' exonuclease that prefers single-stranded DNA and RNA. May play a role in the H(2)O(2)-induced DNA damage repair. This is 3'-5' ssDNA/RNA exonuclease TatD from Citrobacter rodentium (strain ICC168) (Citrobacter freundii biotype 4280).